The following is a 298-amino-acid chain: Glycine--tRNA ligase alpha subunit (298 aa).

This sequence belongs to the class-II aminoacyl-tRNA synthetase family. In terms of assembly, tetramer of two alpha and two beta subunits.

It is found in the cytoplasm. It carries out the reaction tRNA(Gly) + glycine + ATP = glycyl-tRNA(Gly) + AMP + diphosphate. This chain is Glycine--tRNA ligase alpha subunit, found in Helicobacter pylori (strain HPAG1).